The sequence spans 519 residues: LysM domain-containing protein ARB_03442 (519 aa).

The signal sequence occupies residues 1 to 19; sequence MGQLKQLAGILALASPAIA. The N-linked (GlcNAc...) asparagine glycan is linked to Asn47. The LysM domain occupies 312-358; the sequence is KYYNVVAGDTCASISSEFEVTMDELLTYNPELHPNCENLWANFAICV. A lysM domain region spans residues 314 to 358; it reads YNVVAGDTCASISSEFEVTMDELLTYNPELHPNCENLWANFAICV. Over residues 407–416 the composition is skewed to low complexity; the sequence is PDAPDAQGQT. Residues 407–458 form a disordered region; it reads PDAPDAQGQTVHDDEPPEEPHIEEPPKDIPAGDDDDRKKAKLPLPSGKYPLP. Over residues 417-433 the composition is skewed to basic and acidic residues; the sequence is VHDDEPPEEPHIEEPPK. A glycan (N-linked (GlcNAc...) asparagine) is linked at Asn460. The region spanning 467–510 is the Chitin-binding type-1 domain; the sequence is DGSCNEYISCVGSPFGVCCSTSGWCGYGKPWCGVGNCVSGYCDT. 4 cysteine pairs are disulfide-bonded: Cys470-Cys485, Cys476-Cys491, Cys484-Cys498, and Cys503-Cys508.

Its subcellular location is the secreted. Might have a role in sequestration of chitin oligosaccharides (breakdown products of fungal cell walls that are released during invasion and act as triggers of host immunity) to dampen host defense. The protein is LysM domain-containing protein ARB_03442 of Arthroderma benhamiae (strain ATCC MYA-4681 / CBS 112371) (Trichophyton mentagrophytes).